The sequence spans 148 residues: 3-dehydroquinate dehydratase (148 aa).

Tyr-23 (proton acceptor) is an active-site residue. Residues Asn-75, His-81, and Asp-88 each contribute to the substrate site. His-101 serves as the catalytic Proton donor. Residues 102–103 and Arg-112 each bind substrate; that span reads LS.

Belongs to the type-II 3-dehydroquinase family. As to quaternary structure, homododecamer.

It carries out the reaction 3-dehydroquinate = 3-dehydroshikimate + H2O. It participates in metabolic intermediate biosynthesis; chorismate biosynthesis; chorismate from D-erythrose 4-phosphate and phosphoenolpyruvate: step 3/7. Catalyzes a trans-dehydration via an enolate intermediate. This is 3-dehydroquinate dehydratase from Xanthomonas campestris pv. campestris (strain B100).